We begin with the raw amino-acid sequence, 208 residues long: Calcyphosin-like protein (208 aa).

EF-hand domains lie at 39 to 74 (AGIK…YAVV), 75 to 110 (MEKE…PMSR), 111 to 146 (ARKE…KHHP), and 154 to 191 (TEEQ…VSAS). Ca(2+)-binding residues include Asp-52, Asn-54, Asn-56, Thr-58, Glu-63, Asp-88, Asp-90, Ser-92, Thr-94, and Glu-99.

It is found in the cytoplasm. This chain is Calcyphosin-like protein (Capsl), found in Mus musculus (Mouse).